The primary structure comprises 1226 residues: DNA-directed RNA polymerase subunit beta (1226 aa).

It belongs to the RNA polymerase beta chain family. As to quaternary structure, the RNAP catalytic core consists of 2 alpha, 1 beta, 1 beta' and 1 omega subunit. When a sigma factor is associated with the core the holoenzyme is formed, which can initiate transcription.

The enzyme catalyses RNA(n) + a ribonucleoside 5'-triphosphate = RNA(n+1) + diphosphate. Functionally, DNA-dependent RNA polymerase catalyzes the transcription of DNA into RNA using the four ribonucleoside triphosphates as substrates. This chain is DNA-directed RNA polymerase subunit beta, found in Leptospira interrogans serogroup Icterohaemorrhagiae serovar Lai (strain 56601).